A 209-amino-acid polypeptide reads, in one-letter code: Nucleoside triphosphate pyrophosphatase (209 aa).

Catalysis depends on D79, which acts as the Proton acceptor.

Belongs to the Maf family. A divalent metal cation serves as cofactor.

The protein localises to the cytoplasm. The catalysed reaction is a ribonucleoside 5'-triphosphate + H2O = a ribonucleoside 5'-phosphate + diphosphate + H(+). It catalyses the reaction a 2'-deoxyribonucleoside 5'-triphosphate + H2O = a 2'-deoxyribonucleoside 5'-phosphate + diphosphate + H(+). In terms of biological role, nucleoside triphosphate pyrophosphatase. May have a dual role in cell division arrest and in preventing the incorporation of modified nucleotides into cellular nucleic acids. In Mycolicibacterium vanbaalenii (strain DSM 7251 / JCM 13017 / BCRC 16820 / KCTC 9966 / NRRL B-24157 / PYR-1) (Mycobacterium vanbaalenii), this protein is Nucleoside triphosphate pyrophosphatase.